A 702-amino-acid chain; its full sequence is Arylphorin subunit alpha (702 aa).

An N-terminal signal peptide occupies residues 1-16 (MKTVVILAGLVALALS). Asn75 and Asn214 each carry an N-linked (GlcNAc...) asparagine glycan.

This sequence belongs to the hemocyanin family. As to quaternary structure, arylphorin is a hexamer of subunits alpha and beta. In terms of tissue distribution, fat body.

The protein resides in the secreted. It is found in the extracellular space. Its function is as follows. Arylphorin is a larval storage protein (LSP) which may serve as a storage protein used primarily as a source of aromatic amino acids for protein synthesis during metamorphosis. It is a constituent of the sclerotizing system of the cuticle, and serves as a carrier for ecdysteroid hormone. In Manduca sexta (Tobacco hawkmoth), this protein is Arylphorin subunit alpha.